We begin with the raw amino-acid sequence, 307 residues long: MDWQQLHLQCAKQDVDLAESLLLEEGALSISLEDAGDQPLFEPLPGQSPLWDEVILTGLFTADTAQDIESMAQTLAAQVNARRVWTTALADTDWEREWMSHYVPIECTNNLWIVPKWMTPPNPDAVNIMMDPGLAFGTGYHATTRLCLDWLTDQDLSDKVIIDYGCGSGILGIAALLLGAKQVYSVDIDPQAVLATKQNAERNDVTHALEVYLPEDFAKAFAAGDIPKADIITANILAKPLMELAPYLATLIKPKGGIVLAGLISEQLEDMVRAYEPWFNLDTRHSYEKSDDHDDSHWHRLSGTFTG.

Residues T144, G165, D187, and N235 each contribute to the S-adenosyl-L-methionine site.

It belongs to the methyltransferase superfamily. PrmA family.

It localises to the cytoplasm. The catalysed reaction is L-lysyl-[protein] + 3 S-adenosyl-L-methionine = N(6),N(6),N(6)-trimethyl-L-lysyl-[protein] + 3 S-adenosyl-L-homocysteine + 3 H(+). Its function is as follows. Methylates ribosomal protein L11. This chain is Ribosomal protein L11 methyltransferase, found in Psychrobacter sp. (strain PRwf-1).